The following is a 116-amino-acid chain: Large ribosomal subunit protein uL18 (116 aa).

It belongs to the universal ribosomal protein uL18 family. As to quaternary structure, part of the 50S ribosomal subunit; part of the 5S rRNA/L5/L18/L25 subcomplex. Contacts the 5S and 23S rRNAs.

Functionally, this is one of the proteins that bind and probably mediate the attachment of the 5S RNA into the large ribosomal subunit, where it forms part of the central protuberance. The sequence is that of Large ribosomal subunit protein uL18 from Alcanivorax borkumensis (strain ATCC 700651 / DSM 11573 / NCIMB 13689 / SK2).